The primary structure comprises 658 residues: Threonine--tRNA ligase (658 aa).

The TGS domain occupies methionine 1 to glutamate 61. The catalytic stretch occupies residues aspartate 259–proline 554. Residues cysteine 353, histidine 404, and histidine 531 each contribute to the Zn(2+) site.

The protein belongs to the class-II aminoacyl-tRNA synthetase family. Homodimer. Zn(2+) is required as a cofactor.

It is found in the cytoplasm. The enzyme catalyses tRNA(Thr) + L-threonine + ATP = L-threonyl-tRNA(Thr) + AMP + diphosphate + H(+). In terms of biological role, catalyzes the attachment of threonine to tRNA(Thr) in a two-step reaction: L-threonine is first activated by ATP to form Thr-AMP and then transferred to the acceptor end of tRNA(Thr). Also edits incorrectly charged L-seryl-tRNA(Thr). The chain is Threonine--tRNA ligase from Streptomyces coelicolor (strain ATCC BAA-471 / A3(2) / M145).